The following is a 610-amino-acid chain: UvrABC system protein C (610 aa).

The 79-residue stretch at 16–94 (SQPGVYRMYD…IKLYQPRYNV (79 aa)) folds into the GIY-YIG domain. The UVR domain occupies 204–239 (DQVLTQLIARMEKASQDLAFEEAARIRDQIQAVRRV).

The protein belongs to the UvrC family. As to quaternary structure, interacts with UvrB in an incision complex.

The protein localises to the cytoplasm. The UvrABC repair system catalyzes the recognition and processing of DNA lesions. UvrC both incises the 5' and 3' sides of the lesion. The N-terminal half is responsible for the 3' incision and the C-terminal half is responsible for the 5' incision. In Salmonella enteritidis PT4 (strain P125109), this protein is UvrABC system protein C.